The sequence spans 420 residues: Probable protein phosphatase 2C 73 (420 aa).

Residues 33 to 336 (GVSMHTKQGW…DDCAVVCLFL (304 aa)) form the PPM-type phosphatase domain. Mn(2+)-binding residues include D69 and G70. Residues 96–105 (LKTEQDPSSN) are compositionally biased toward polar residues. Residues 96–119 (LKTEQDPSSNTDKETLEKSDCTSL) form a disordered region. Basic and acidic residues predominate over residues 106-115 (TDKETLEKSD). 2 residues coordinate Mn(2+): D281 and D327.

The protein belongs to the PP2C family. Requires Mg(2+) as cofactor. It depends on Mn(2+) as a cofactor.

It catalyses the reaction O-phospho-L-seryl-[protein] + H2O = L-seryl-[protein] + phosphate. The enzyme catalyses O-phospho-L-threonyl-[protein] + H2O = L-threonyl-[protein] + phosphate. The polypeptide is Probable protein phosphatase 2C 73 (Oryza sativa subsp. japonica (Rice)).